Consider the following 437-residue polypeptide: Zinc finger CCCH domain-containing protein 40 (437 aa).

The C3H1-type zinc-finger motif lies at 6-33 (MYKTKLCILFNKTGDCSRPNCTFAHGNA). The disordered stretch occupies residues 35–107 (LRRPGESSFT…MPFENRRDKD (73 aa)). A compositionally biased stretch (basic and acidic residues) spans 48-85 (HNMDSDLRDRRHNMDSDLRDRLGRQFSPERRPSLDRSG). Residues 145–244 (NNVLEEQLKD…LGNQLSTYLA (100 aa)) adopt a coiled-coil conformation. A Phosphoserine modification is found at Ser-259. Disordered regions lie at residues 266 to 360 (RNLR…RRRF) and 380 to 437 (EFDD…DDSV). The segment covering 307-319 (RGEEEKVENEKKR) has biased composition (basic and acidic residues). Composition is skewed to acidic residues over residues 333-343 (EEESGAWNDED) and 383-392 (DVAESEEENP). A compositionally biased stretch (basic and acidic residues) spans 426-437 (MEQKKAYDDDSV).

The chain is Zinc finger CCCH domain-containing protein 40 from Arabidopsis thaliana (Mouse-ear cress).